Reading from the N-terminus, the 212-residue chain is Uracil phosphoribosyltransferase (212 aa).

Residues R78, R103, and 130 to 138 (DPMLATGGS) each bind 5-phospho-alpha-D-ribose 1-diphosphate. Uracil contacts are provided by residues I193 and 198-200 (GDA). Residue D199 coordinates 5-phospho-alpha-D-ribose 1-diphosphate.

The protein belongs to the UPRTase family. Requires Mg(2+) as cofactor.

It catalyses the reaction UMP + diphosphate = 5-phospho-alpha-D-ribose 1-diphosphate + uracil. The protein operates within pyrimidine metabolism; UMP biosynthesis via salvage pathway; UMP from uracil: step 1/1. Its activity is regulated as follows. Allosterically activated by GTP. Functionally, catalyzes the conversion of uracil and 5-phospho-alpha-D-ribose 1-diphosphate (PRPP) to UMP and diphosphate. The sequence is that of Uracil phosphoribosyltransferase from Bordetella avium (strain 197N).